The sequence spans 254 residues: Ciliary microtubule associated protein 1A (254 aa).

2 STPGR repeats span residues 180–205 (PGPA…MAAR) and 216–241 (PGPG…FGIK). The interval 207–228 (EPPGDKTLKPGPGAHSPEKVTL) is disordered.

The protein belongs to the CIMAP family. In terms of assembly, microtubule inner protein component of sperm flagellar doublet microtubules. Testis-specific (at protein level). Expression restricted to the germ cell fraction, absent in somatic cell fractions such as Sertoli and Leydig cells. Expression detected in the third week postpartum (23 days) after haploid germ cells developed, expression increased with age. Expressed in the tails of elongated spermatids sticking out toward the tubular lumen, and in cytoplasmic droplets still attached to the spermatid tail membrane. Expressed in the tails of mature sperm, from the connecting piece proximal to the head, along the middle and principal pieces, down to the distal end piece.

The protein resides in the cytoplasm. Its subcellular location is the cytoskeleton. It is found in the flagellum axoneme. In terms of biological role, outer dense fibers are filamentous structures located on the outside of the axoneme in the midpiece and principal piece of the mammalian sperm tail. May help to maintain the passive elastic structures and elastic recoil of the sperm tail. This Mus musculus (Mouse) protein is Ciliary microtubule associated protein 1A (Cimap1a).